Consider the following 354-residue polypeptide: S-adenosylmethionine-dependent nucleotide dehydratase RSAD2 (354 aa).

The 221-residue stretch at Ala-62 to Leu-282 folds into the Radical SAM core domain. 3 residues coordinate [4Fe-4S] cluster: Cys-76, Cys-80, and Cys-83.

This sequence belongs to the radical SAM superfamily. RSAD2 family. [4Fe-4S] cluster serves as cofactor. In terms of tissue distribution, constitutively expressed in spleen, head kidney and trunk kidney. Following viral infection, detected in most organs including liver, gill, intestine, heart, muscle and brain.

The protein localises to the endoplasmic reticulum membrane. Interferon-inducible iron-sulfur (4FE-4S) cluster-binding antiviral protein which plays a major role in the cell antiviral state induced by type I and type II interferon. This Siniperca chuatsi (Mandarin fish) protein is S-adenosylmethionine-dependent nucleotide dehydratase RSAD2.